A 264-amino-acid chain; its full sequence is Movement protein (264 aa).

Residues 211 to 264 (RTKSSKRGPKNNNNLGKGRSGGRPKPKSFDEVEKEFDNLIEDEAETSVADSDSY) form a disordered region. The segment covering 237 to 247 (KSFDEVEKEFD) has biased composition (basic and acidic residues).

Belongs to the tobamovirus movement protein family. Binds to host RBCS at the plasmodesmata; this interaction seems required for viral systemic movement. In resistant plants, interacts with host MBP2C at host microtubules; this interaction prevents virus cell to cell movement. In resistant plants, interacts with host resistance (R) protein (e.g. tomato ToMV resistance protein TM-2(2), AC Q71BG9) at the host plasma membrane; this interaction triggers host defense responses leading to programmed cell death.

Its subcellular location is the host cytoplasm. The protein resides in the host cytoskeleton. The protein localises to the host cell junction. It localises to the host plasmodesma. Functionally, transports viral genome to neighboring plant cells directly through plasmosdesmata, without any budding. The movement protein allows efficient cell to cell propagation, by bypassing the host cell wall barrier. Forms a ribonucleoprotein complex with viral RNA. Binds microtubules and modulates microtubule stability. Can bind double-stranded DNA. Triggers host hypersensitive defense reaction in incompatible plants harboring resistance (R) proteins. The chain is Movement protein (MP) from Antirrhinum majus (Garden snapdragon).